Consider the following 376-residue polypeptide: MLNREQLISIRRDLHQIPELGFKEFKTQAYLINHLDAYSKDRIEMETWRTGLFVKVKGTNPERVFAYRADMDGLSIPEDTGYPFQSVHEGKMHACGHDLHMTIALGVIDHFVHEPIKEDLLFMFQPAEEGPGGAEPMLTSDVLKKWTPDFITALHIAPEYPVGTIATKPGLLFANTSELVIDLEGKGGHAAYPHLANDMVVAASALVGQLQSVISRNVDPLDSAVITIGTITGGTAQNIIAQHAKLDGTIRTLSPESMEKVRKRIEALAKGIEIGYECKATVRYPSSYYEVDNSKELTEEFMSYVAEEGLANVVECREAMTGEDFGYMLKKYPGFMFWLGVDSEYGLHHAKLMPDEKAIETAVNVMTAYFKKQAGE.

Residue aspartate 70 is part of the active site. The active-site Proton acceptor is glutamate 129.

This sequence belongs to the peptidase M20A family. N-acetyldiaminopimelate deacetylase subfamily.

The catalysed reaction is N-acetyl-(2S,6S)-2,6-diaminopimelate + H2O = (2S,6S)-2,6-diaminopimelate + acetate. It functions in the pathway amino-acid biosynthesis; L-lysine biosynthesis via DAP pathway; LL-2,6-diaminopimelate from (S)-tetrahydrodipicolinate (acetylase route): step 3/3. Catalyzes the conversion of N-acetyl-diaminopimelate to diaminopimelate and acetate. In Bacillus pumilus (strain SAFR-032), this protein is N-acetyldiaminopimelate deacetylase.